Reading from the N-terminus, the 213-residue chain is Uridine kinase (213 aa).

15-22 contributes to the ATP binding site; the sequence is GASASGKS.

It belongs to the uridine kinase family.

The protein localises to the cytoplasm. The enzyme catalyses uridine + ATP = UMP + ADP + H(+). It catalyses the reaction cytidine + ATP = CMP + ADP + H(+). It functions in the pathway pyrimidine metabolism; CTP biosynthesis via salvage pathway; CTP from cytidine: step 1/3. It participates in pyrimidine metabolism; UMP biosynthesis via salvage pathway; UMP from uridine: step 1/1. The sequence is that of Uridine kinase from Escherichia fergusonii (strain ATCC 35469 / DSM 13698 / CCUG 18766 / IAM 14443 / JCM 21226 / LMG 7866 / NBRC 102419 / NCTC 12128 / CDC 0568-73).